Here is a 416-residue protein sequence, read N- to C-terminus: Isocitrate dehydrogenase [NADP] (416 aa).

Residues 77–79 and arginine 84 each bind NADP(+); that span reads TIT. Threonine 79 is a binding site for substrate. Substrate-binding positions include 96-102, arginine 111, and arginine 134; that span reads SPNGTIR. Aspartate 254 lines the Mn(2+) pocket. Lysine 262 is a binding site for NADP(+). Mn(2+) is bound at residue aspartate 277. Residues 312–317 and asparagine 330 contribute to the NADP(+) site; that span reads GTVTRH.

This sequence belongs to the isocitrate and isopropylmalate dehydrogenases family. As to quaternary structure, heterodimer. It depends on Mg(2+) as a cofactor. Mn(2+) serves as cofactor.

The protein resides in the cytoplasm. It carries out the reaction D-threo-isocitrate + NADP(+) = 2-oxoglutarate + CO2 + NADPH. In terms of biological role, may supply 2-oxoglutarate for amino acid biosynthesis and ammonia assimilation via the glutamine synthetase/glutamate synthase (GS/GOGAT) pathway. This Solanum tuberosum (Potato) protein is Isocitrate dehydrogenase [NADP] (ICDH-1).